The primary structure comprises 179 residues: Chymotrypsin inhibitor ECI (179 aa).

Pyrrolidone carboxylic acid is present on Gln-1. 2 disulfides stabilise this stretch: Cys-40-Cys-84 and Cys-134-Cys-143.

This sequence belongs to the protease inhibitor I3 (leguminous Kunitz-type inhibitor) family.

In terms of biological role, inhibition of chymotrypsin. This chain is Chymotrypsin inhibitor ECI, found in Erythrina variegata (Indian coral tree).